Reading from the N-terminus, the 327-residue chain is Small ribosomal subunit protein RACK1 (327 aa).

7 WD repeats span residues 13-44, 61-91, 103-133, 148-180, 192-222, 233-262, and 293-323; these read AHTDMVTAIATPIDNSDTIVSASRDKSIIVWK, GHSHFVEDVVLSSDGQFALSGSWDGELRLWD, GHTKDVLSVAFSLDNRQIVSASRDRTIKLWN, GHRDWVSCVRFSPNTLQPTIVSASCDKTVKVWN, GHTGYVSTVAVSPDGSLCASGGKDGVVLLWD, EANSVIHALCFTPNRYWLCAATEQGIKIWD, and RKVIYCTSLNWSADGSTLFSGYTDGVIRVWG.

This sequence belongs to the WD repeat G protein beta family. Ribosomal protein RACK1 subfamily.

This Brassica napus (Rape) protein is Small ribosomal subunit protein RACK1 (GB1).